The chain runs to 325 residues: Dehydrogenase/reductase SDR family member 7B (325 aa).

Residues 1-17 lie on the Cytoplasmic side of the membrane; sequence MISPSSRKGMLKERAMD. Residues 18–38 form a helical; Signal-anchor for type II membrane protein membrane-spanning segment; the sequence is LVTQTTILPLLFGCLGIFSLF. The Lumenal portion of the chain corresponds to 39 to 325; sequence RLLQRTRSKA…ARKERKSKNS (287 aa). Residues S62 and L64 each coordinate NAD(+). S194 is a substrate binding site. Residues Y207, K211, and T242 each contribute to the NAD(+) site. Y207 functions as the Proton acceptor in the catalytic mechanism.

Belongs to the short-chain dehydrogenases/reductases (SDR) family.

It is found in the endoplasmic reticulum membrane. Its function is as follows. Putative oxidoreductase. This is Dehydrogenase/reductase SDR family member 7B (Dhrs7b) from Rattus norvegicus (Rat).